A 557-amino-acid chain; its full sequence is 2-isopropylmalate synthase (557 aa).

Residues 33 to 307 (PIWCSSDLRD…DPQLDFSDID (275 aa)) form the Pyruvate carboxyltransferase domain. Mg(2+) contacts are provided by Asp42, His246, His248, and Asn282. Residues 439-557 (ANSPYALVSH…SLSQQEAKAA (119 aa)) form a regulatory domain region.

Belongs to the alpha-IPM synthase/homocitrate synthase family. LeuA type 2 subfamily. Homodimer. The cofactor is Mg(2+).

The protein resides in the cytoplasm. It carries out the reaction 3-methyl-2-oxobutanoate + acetyl-CoA + H2O = (2S)-2-isopropylmalate + CoA + H(+). It participates in amino-acid biosynthesis; L-leucine biosynthesis; L-leucine from 3-methyl-2-oxobutanoate: step 1/4. Its function is as follows. Catalyzes the condensation of the acetyl group of acetyl-CoA with 3-methyl-2-oxobutanoate (2-ketoisovalerate) to form 3-carboxy-3-hydroxy-4-methylpentanoate (2-isopropylmalate). This chain is 2-isopropylmalate synthase, found in Pseudomonas putida (strain W619).